The chain runs to 262 residues: Tritrans,polycis-undecaprenyl-diphosphate synthase (geranylgeranyl-diphosphate specific) (262 aa).

D40 is an active-site residue. D40 provides a ligand contact to Mg(2+). Residues 41 to 44, W45, and 85 to 87 contribute to the substrate site; these read GNRR and STE. Residue N88 is the Proton acceptor of the active site. Substrate is bound by residues R92, R211, and 217 to 219; that span reads RIS. E230 is a Mg(2+) binding site.

This sequence belongs to the UPP synthase family. As to quaternary structure, homodimer. Requires Mg(2+) as cofactor.

It catalyses the reaction geranylgeranyl diphosphate + 7 isopentenyl diphosphate = tri-trans,hepta-cis-undecaprenyl diphosphate + 7 diphosphate. Functionally, catalyzes the sequential condensation of isopentenyl diphosphate (IPP) with geranylgeranyl diphosphate (GGPP) to yield (2Z,6Z,10Z,14Z,18Z,22Z,26Z,30E,34E,38E)-undecaprenyl diphosphate (tritrans,heptacis-UPP). It is probably the precursor of glycosyl carrier lipids. This Sulfurisphaera tokodaii (strain DSM 16993 / JCM 10545 / NBRC 100140 / 7) (Sulfolobus tokodaii) protein is Tritrans,polycis-undecaprenyl-diphosphate synthase (geranylgeranyl-diphosphate specific).